The chain runs to 454 residues: Phosphoglucosamine mutase (454 aa).

Ser-101 (phosphoserine intermediate) is an active-site residue. Mg(2+) is bound by residues Ser-101, Asp-243, Asp-245, and Asp-247. At Ser-101 the chain carries Phosphoserine.

Belongs to the phosphohexose mutase family. The cofactor is Mg(2+). Activated by phosphorylation.

It carries out the reaction alpha-D-glucosamine 1-phosphate = D-glucosamine 6-phosphate. Catalyzes the conversion of glucosamine-6-phosphate to glucosamine-1-phosphate. This chain is Phosphoglucosamine mutase, found in Citrifermentans bemidjiense (strain ATCC BAA-1014 / DSM 16622 / JCM 12645 / Bem) (Geobacter bemidjiensis).